The following is a 1118-amino-acid chain: Pleckstrin homology domain-containing family A member 7 (1118 aa).

2 WW domains span residues 8-41 (DTLP…HPRT) and 53-86 (SDLP…HPVT). The segment covering 100–113 (EEPHPHMSKPERNQ) has biased composition (basic and acidic residues). The disordered stretch occupies residues 100 to 145 (EEPHPHMSKPERNQRPSSMVSETSTAGTTSTLEAKPGPKIVKSSSK). The span at 114 to 131 (RPSSMVSETSTAGTTSTL) shows a compositional bias: polar residues. The 119-residue stretch at 163–281 (PVVVRGWLHK…WVRAMNQAAQ (119 aa)) folds into the PH domain. Composition is skewed to basic and acidic residues over residues 334-355 (FNRR…EGRR) and 434-443 (HWTKAQKGDG). Disordered stretches follow at residues 334–512 (FNRR…RRAH) and 528–629 (QFRH…RRSM). Positions 452 to 481 (LPRQGPSQPLSFPENYQSLPKSTRHLSGSS) are enriched in polar residues. Positions 494 to 512 (YAQDRASHLKMSSEERRAH) are enriched in basic and acidic residues. 6 positions are modified to phosphoserine: S533, S542, S566, S601, S605, and S609. Positions 535-693 (TAPIGAGSPE…AESDIDVKLS (159 aa)) are interaction with CTNND1. Residues 564 to 579 (PPSPSDIPPPGPPRPF) show a composition bias toward pro residues. The span at 586 to 602 (TPAERVTVKPPEQRRSV) shows a compositional bias: basic and acidic residues. Positions 697 to 798 (EQDRILQDLE…LQEQHRRAFF (102 aa)) form a coiled coil. 2 disordered regions span residues 839 to 873 (KTVP…VRTP) and 886 to 968 (VPYR…EQGQ). S857 and S864 each carry phosphoserine. A Phosphothreonine modification is found at T867. Phosphoserine occurs at positions 868, 900, and 904. Over residues 930–939 (DQPPAVPPLP) the composition is skewed to pro residues. Positions 955–966 (RQSDERKRDREQ) are enriched in basic and acidic residues. 2 positions are modified to phosphoserine: S983 and L990. A disordered region spans residues 1003-1024 (GSESRYQTLPGRGLSGSTSRLQ). A coiled-coil region spans residues 1064-1091 (QRGKMSAEEQLERMKRHQKALVRERKRT).

As to quaternary structure, interacts with CAMSAP3 and CTNND1. Interacts (via WW domains) with TSPAN33 (via cytoplasmic domain) and with PDZD11; the interaction with TSPAN33 is dependent on PDZD11 being bound to PLEKHA7 and facilitates the docking of ADAM10 to zonula adherens through interaction of TSPAN33 with ADAM10. Expressed in kidney and lung (at protein level).

It localises to the cell junction. Its subcellular location is the adherens junction. The protein localises to the cytoplasm. It is found in the cytoskeleton. The protein resides in the microtubule organizing center. It localises to the centrosome. Functionally, required for zonula adherens biogenesis and maintenance. Acts via its interaction with CAMSAP3, which anchors microtubules at their minus-ends to zonula adherens, leading to the recruitment of KIFC3 kinesin to the junctional site. Mediates docking of ADAM10 to zonula adherens through a PDZD11-dependent interaction with the ADAM10-binding protein TSPAN33. This is Pleckstrin homology domain-containing family A member 7 (Plekha7) from Mus musculus (Mouse).